We begin with the raw amino-acid sequence, 106 residues long: ATP-dependent Clp protease adapter protein ClpS (106 aa).

The protein belongs to the ClpS family. In terms of assembly, binds to the N-terminal domain of the chaperone ClpA.

Its function is as follows. Involved in the modulation of the specificity of the ClpAP-mediated ATP-dependent protein degradation. The chain is ATP-dependent Clp protease adapter protein ClpS from Salmonella agona (strain SL483).